Consider the following 243-residue polypeptide: Ice-binding protein K3-B1 (243 aa).

An N-terminal signal peptide occupies residues 1-20 (MFSASSLLAVIALAISSVSA).

Belongs to the ice-binding protein family.

In terms of biological role, binds to the surface of ice crystals. Has low thermal hysteresis (TH) activity, which is the ability to lower the freezing point of an aqueous solution below its melting point. The TH activity of this protein is approximately 0.3 degrees Celsius at 11 mM. This Typhula ishikariensis (Gray snow mold fungus) protein is Ice-binding protein K3-B1.